The following is a 461-amino-acid chain: Regulatory protein AtoC (461 aa).

In terms of domain architecture, Response regulatory spans 6–120 (RILIVDDEDN…ELNLIVQRAL (115 aa)). Aspartate 55 carries the 4-aspartylphosphate modification. Position 73 is a phosphohistidine (histidine 73). One can recognise a Sigma-54 factor interaction domain in the interval 145–374 (ILTNSPAMMD…LSNVIERAVV (230 aa)). ATP is bound by residues 173–180 (GESGTGKE) and 236–245 (ANEGTLLLDE). A DNA-binding region (H-T-H motif) is located at residues 433 to 452 (RTRTALMLGISRRALMYKLQ).

In terms of processing, phosphorylated by AtoS. Contains two phosphorylation sites, which are both involved in the transduction of the acetoacetate signal. Asp-55 is probably the primary phosphorylation site, but either both residues can be phosphorylated independently by AtoS or the phosphate group can be transferred between them. The N-terminus is blocked.

It is found in the cytoplasm. Functionally, member of the two-component regulatory system AtoS/AtoC. In the presence of acetoacetate, AtoS/AtoC stimulates the expression of the atoDAEB operon, leading to short chain fatty acid catabolism and activation of the poly-(R)-3-hydroxybutyrate (cPHB) biosynthetic pathway. Also induces the operon in response to spermidine. Involved in the regulation of motility and chemotaxis, via transcriptional induction of the flagellar regulon. AtoC acts by binding directly to the promoter region of the target genes. In addition to its role as a transcriptional regulator, functions as a post-translational regulator that inhibits polyamine biosynthesis via regulation of ornithine decarboxylase (ODC). The chain is Regulatory protein AtoC (atoC) from Escherichia coli (strain K12).